Here is a 215-residue protein sequence, read N- to C-terminus: Small ribosomal subunit protein uS3 (215 aa).

Positions 39–109 (IRKFIKKRLE…EVLVDVKEVK (71 aa)) constitute a KH type-2 domain.

Belongs to the universal ribosomal protein uS3 family. In terms of assembly, part of the 30S ribosomal subunit. Forms a tight complex with proteins S10 and S14.

Its function is as follows. Binds the lower part of the 30S subunit head. Binds mRNA in the 70S ribosome, positioning it for translation. This Methylacidiphilum infernorum (isolate V4) (Methylokorus infernorum (strain V4)) protein is Small ribosomal subunit protein uS3.